The primary structure comprises 474 residues: 3-isopropylmalate dehydratase large subunit (474 aa).

The [4Fe-4S] cluster site is built by Cys350, Cys411, and Cys414.

The protein belongs to the aconitase/IPM isomerase family. LeuC type 1 subfamily. Heterodimer of LeuC and LeuD. [4Fe-4S] cluster is required as a cofactor.

It carries out the reaction (2R,3S)-3-isopropylmalate = (2S)-2-isopropylmalate. It participates in amino-acid biosynthesis; L-leucine biosynthesis; L-leucine from 3-methyl-2-oxobutanoate: step 2/4. Functionally, catalyzes the isomerization between 2-isopropylmalate and 3-isopropylmalate, via the formation of 2-isopropylmaleate. The sequence is that of 3-isopropylmalate dehydratase large subunit from Hydrogenovibrio crunogenus (strain DSM 25203 / XCL-2) (Thiomicrospira crunogena).